The following is a 752-amino-acid chain: Catalase-peroxidase (752 aa).

Positions 1-21 (MSNESKCPFHQTAGGGTTNRD) are disordered. A cross-link (tryptophyl-tyrosyl-methioninium (Trp-Tyr) (with M-271)) is located at residues 91 to 245 (WHSAGTYRIG…LAAVQMGLIY (155 aa)). His-92 acts as the Proton acceptor in catalysis. The segment at 204–228 (QAPGQGDLVAEPAKHGEEQNRDLSA) is disordered. The segment covering 215-228 (PAKHGEEQNRDLSA) has biased composition (basic and acidic residues). Positions 245–271 (YVNPEGPEGNPDPVASGKDIRETFGRM) form a cross-link, tryptophyl-tyrosyl-methioninium (Tyr-Met) (with W-91). His-286 is a binding site for heme. Positions 366–391 (AHQWQPKEGKGAGTVPDAHDPSKRHA) are disordered.

The protein belongs to the peroxidase family. Peroxidase/catalase subfamily. In terms of assembly, homodimer or homotetramer. Requires heme b as cofactor. In terms of processing, formation of the three residue Trp-Tyr-Met cross-link is important for the catalase, but not the peroxidase activity of the enzyme.

It catalyses the reaction H2O2 + AH2 = A + 2 H2O. The catalysed reaction is 2 H2O2 = O2 + 2 H2O. Bifunctional enzyme with both catalase and broad-spectrum peroxidase activity. The protein is Catalase-peroxidase of Pseudomonas putida (strain W619).